We begin with the raw amino-acid sequence, 1128 residues long: MTISDKIRIYELSRDLNLENKDILDAAQKLSISVKSHSSSISVEEAKKIKNLINKKNSDKQILSINKPSNKKDNYKQNKEDKSPVISSVKGKPLKDNSNKKQLLNKPLNKPESLKVIPNQLKNPNKPNIYNSSQSQANLTNQNTKSKPSEHFNKDKKTFRNNTIPPIKTPAKPPIQLIAKPKNINNNLKSNESSKNIPNSGDKRELSLKPDQNRNKPKPKNSNNRRNTPELVGAPIRRDDPNKQNNKQNITFKQTVSNRPGTPNRPGTPNRPGMPNRPGLRNKPTDQGRPGSFNRQANPNRAGAPNRPGMPNRPGLRNKPTDQGRPGSFNRQANPNRAGAPNRPGMPNRPGSRFNSQKSTGIRKPVSPNELLQLQKTNKSEKDTLAKTNNQKQNIESPKQKAKAPASRPNAVPSSKKPPHRPFSNSSKKPGRKDWDDSAKLEALRNKNPQKQRQKVHIIGENDDSLTSETSGYSGEKISILSASLARPKKEKSEESKSHKSTKQFKKKKKETTRQRQKRRAMELKAAKEAKQVRPEMIIVPEDNLTVQELADKLSLESSEIIKSLFFKGITATVTQSLDLATIETVAEEFGVPVLQDDIQEAAEKTVDMIESDDFDSLIKRPPVITVMGHVDHGKTSLLDSIRESRVASGEAGGITQHIGAYQVEFKHESKKKKLTFLDTPGHEAFTAMRARGTKVTDVAVLVVAADDGCRPQTLEAISHARAAKVPIVVAINKIDKEGASPERVKQELSEKDLIAEDWGGDTVMVPVSAIKKQNIDKLLEMILLVSEVEDLQANPDRSAKGTVIEAHLDKAKGPVATLLVQNGTLKSGDVLAAGSVLGKIRAMVDEHGNRIKEAGPSFPVEALGFSEVPTAGDEFEVYPDEKTARAIVGDRATDARATKLAQQMASRRVTLSSLSTQANDGELKELNLILKADVQGSVEAILGSLEQLPKNEVQVRVLLSAPGEITETDIDLAAASGSVIIGFNTSLASGAKRAADANDVDIREYEVIYKLLEDIQLAMEGLLEPDLVEESLGKAEVRATFAVGKGAIAGCYIQTGKLQRNCSLRVIRSDKVIFEGNLDSLKRSKDDVKEVNTGFECGVGCDKFSSWTEGDIIEAFKFVTKKRTLTQ.

The disordered stretch occupies residues asparagine 57–arginine 519. The span at asparagine 70–serine 83 shows a compositional bias: basic and acidic residues. The segment covering lysine 100–lysine 110 has biased composition (low complexity). The segment covering glutamine 120–serine 146 has biased composition (polar residues). The span at lysine 147 to threonine 158 shows a compositional bias: basic and acidic residues. Residues lysine 182 to asparagine 196 are compositionally biased toward low complexity. Positions glycine 201–arginine 214 are enriched in basic and acidic residues. 2 stretches are compositionally biased toward polar residues: residues lysine 243–glycine 267 and alanine 386–serine 397. Residues arginine 432 to arginine 445 are compositionally biased toward basic and acidic residues. Residues histidine 499–arginine 519 show a composition bias toward basic residues. Residues lysine 620 to leucine 792 form the tr-type G domain. The G1 stretch occupies residues glycine 629 to threonine 636. Glycine 629 to threonine 636 serves as a coordination point for GTP. The segment at glycine 654 to histidine 658 is G2. The tract at residues aspartate 679–glycine 682 is G3. GTP is bound by residues aspartate 679–histidine 683 and asparagine 733–aspartate 736. The interval asparagine 733–aspartate 736 is G4. The interval serine 769 to isoleucine 771 is G5.

This sequence belongs to the TRAFAC class translation factor GTPase superfamily. Classic translation factor GTPase family. IF-2 subfamily.

It is found in the cytoplasm. Its function is as follows. One of the essential components for the initiation of protein synthesis. Protects formylmethionyl-tRNA from spontaneous hydrolysis and promotes its binding to the 30S ribosomal subunits. Also involved in the hydrolysis of GTP during the formation of the 70S ribosomal complex. This chain is Translation initiation factor IF-2, found in Prochlorococcus marinus (strain MIT 9312).